The chain runs to 672 residues: Poly-beta-1,6-N-acetyl-D-glucosamine N-deacetylase (672 aa).

Residues 1–20 form the signal peptide; that stretch reads MLRNGNKYLLMLVSIIMLTA. Cys-21 carries the N-palmitoyl cysteine lipid modification. A lipid anchor (S-diacylglycerol cysteine) is attached at Cys-21. Positions 107–349 constitute a NodB homology domain; sequence KAVVLTFDDG…IQRVKDMQIS (243 aa).

Belongs to the polysaccharide deacetylase family.

It localises to the cell outer membrane. In terms of biological role, catalyzes the N-deacetylation of poly-beta-1,6-N-acetyl-D-glucosamine (PGA), a biofilm adhesin polysaccharide. N-deacetylation promotes PGA export through the PgaA porin. The chain is Poly-beta-1,6-N-acetyl-D-glucosamine N-deacetylase (pgaB) from Escherichia coli (strain K12).